Reading from the N-terminus, the 1193-residue chain is uncharacterized protein (1193 aa).

The N-terminal stretch at 1-25 (MKIKFINYLLLFFIIFLNYNGFVKS) is a signal peptide. At 26 to 1172 (DCYQELDLVL…PQDPSDELST (1147 aa)) the chain is on the extracellular side. 18 N-linked (GlcNAc...) asparagine glycosylation sites follow: asparagine 90, asparagine 183, asparagine 226, asparagine 265, asparagine 281, asparagine 345, asparagine 357, asparagine 436, asparagine 516, asparagine 552, asparagine 583, asparagine 627, asparagine 712, asparagine 765, asparagine 822, asparagine 938, asparagine 1038, and asparagine 1092. The chain crosses the membrane as a helical span at residues 1173–1193 (SSFVQVNLLFLSILIFTIFIF).

The protein resides in the membrane. This is an uncharacterized protein from Dictyostelium discoideum (Social amoeba).